The chain runs to 376 residues: TraB domain-containing protein (376 aa).

Position 1 is an N-acetylmethionine (Met-1). Thr-64 is modified (phosphothreonine).

In Mus musculus (Mouse), this protein is TraB domain-containing protein (Trabd).